The primary structure comprises 91 residues: Probable Fe(2+)-trafficking protein (91 aa).

This sequence belongs to the Fe(2+)-trafficking protein family. In terms of assembly, monomer.

Functionally, could be a mediator in iron transactions between iron acquisition and iron-requiring processes, such as synthesis and/or repair of Fe-S clusters in biosynthetic enzymes. The chain is Probable Fe(2+)-trafficking protein from Escherichia coli O6:H1 (strain CFT073 / ATCC 700928 / UPEC).